The primary structure comprises 113 residues: uncharacterized protein (113 aa).

Residues Asp41 to Arg88 form the Cupin type-2 domain.

This sequence belongs to the SchB/CurC family.

This is an uncharacterized protein from Bacillus subtilis (strain 168).